The sequence spans 214 residues: Vascular endothelial growth factor A (214 aa).

Residues 1–26 (MNFLLSWVHWTLALLLYLHHAKWSQA) form the signal peptide. Cystine bridges form between Cys51–Cys93, Cys82–Cys127, and Cys86–Cys129. Residue Asn100 is glycosylated (N-linked (GlcNAc...) asparagine). The segment covering 131-142 (PKKDRTKPEKKS) has biased composition (basic and acidic residues). Residues 131-159 (PKKDRTKPEKKSVRGKGKGQKRKRKKSRF) form a disordered region. Residues 143 to 159 (VRGKGKGQKRKRKKSRF) show a composition bias toward basic residues.

Belongs to the PDGF/VEGF growth factor family. Homodimer; disulfide-linked. Also found as heterodimer with PGF. Interacts with NRP1. Interacts with isoform 2 of BSG. Interacts with CD82; this interaction inhibits VEGFA-mediated signaling pathway. Expressed in the pituitary, in brain, in particularly in supraoptic and paraventricular nuclei and the choroid plexus. Also found abundantly in the corpus luteum of the ovary and in kidney glomeruli. Expressed in the ductal epithelial cells of post-pubertal mammary glands. Expressed in the ductal and alveolar epithelial cells throughout the whole period of gestational evolution, lactation and involution.

The protein resides in the secreted. In terms of biological role, growth factor active in angiogenesis, vasculogenesis and endothelial cell growth. Induces endothelial cell proliferation, promotes cell migration, inhibits apoptosis and induces permeabilization of blood vessels. Binds to the FLT1/VEGFR1 and KDR/VEGFR2 receptors, heparan sulfate and heparin. May play a role in increasing vascular permeability during lactation, when increased transport of molecules from the blood is required for efficient milk protein synthesis. Binding to NRP1 receptor initiates a signaling pathway needed for motor neuron axon guidance and cell body migration, including for the caudal migration of facial motor neurons from rhombomere 4 to rhombomere 6 during embryonic development. Also binds the DEAR/FBXW7-AS1 receptor. This chain is Vascular endothelial growth factor A (Vegfa), found in Rattus norvegicus (Rat).